A 256-amino-acid polypeptide reads, in one-letter code: Protein FixA (256 aa).

The protein belongs to the ETF beta-subunit/FixA family. As to quaternary structure, heterodimer of FixA and FixB.

The protein operates within amine and polyamine metabolism; carnitine metabolism. In terms of biological role, required for anaerobic carnitine reduction. May bring reductant to CaiA. In Salmonella paratyphi A (strain ATCC 9150 / SARB42), this protein is Protein FixA.